The chain runs to 235 residues: AA9 family lytic polysaccharide monooxygenase D (235 aa).

Residues 1 to 18 form the signal peptide; that stretch reads MKAFFAVLAVVSAPFVLG. Histidine 19 lines the Cu(2+) pocket. Serine 29 carries O-linked (Man...) serine glycosylation. A disulfide bridge links cysteine 61 with cysteine 181. Histidine 94 lines the Cu(2+) pocket. O2 is bound by residues histidine 167 and glutamine 176. Tyrosine 178 is a binding site for Cu(2+). A glycan (N-linked (GlcNAc...) asparagine) is linked at asparagine 221.

It belongs to the polysaccharide monooxygenase AA9 family. Cu(2+) is required as a cofactor.

The protein resides in the secreted. It carries out the reaction [(1-&gt;4)-beta-D-glucosyl]n+m + reduced acceptor + O2 = 4-dehydro-beta-D-glucosyl-[(1-&gt;4)-beta-D-glucosyl]n-1 + [(1-&gt;4)-beta-D-glucosyl]m + acceptor + H2O.. In terms of biological role, lytic polysaccharide monooxygenase (LPMO) that depolymerizes crystalline and amorphous polysaccharides via the oxidation of scissile alpha- or beta-(1-4)-glycosidic bonds, yielding only C1 oxidation products. Catalysis by LPMOs requires the reduction of the active-site copper from Cu(II) to Cu(I) by a reducing agent and H(2)O(2) or O(2) as a cosubstrate. The sequence is that of AA9 family lytic polysaccharide monooxygenase D from Phanerodontia chrysosporium (White-rot fungus).